Consider the following 208-residue polypeptide: MFDLHKFSLRAQEIIEAGGFLYGAGWSPATSSNYSARIDDANIAITVSGKHKGRLQAQDIMVVDLQGRAVASQMKSSAETLLHTVIYDLKPNVGAVLHTHSVTATVLSRALRPNTEIVFEDYELQKAFRGVYTHEGRCVVPIFDNTQDIEALSALSVEYLKEHSDCPGYLIRGHGMYTWGETMAECLRHVEAMEFLLACELEMMRIKS.

2 residues coordinate Zn(2+): His-98 and His-100.

It belongs to the aldolase class II family. MtnB subfamily. It depends on Zn(2+) as a cofactor.

It catalyses the reaction 5-(methylsulfanyl)-D-ribulose 1-phosphate = 5-methylsulfanyl-2,3-dioxopentyl phosphate + H2O. Its pathway is amino-acid biosynthesis; L-methionine biosynthesis via salvage pathway; L-methionine from S-methyl-5-thio-alpha-D-ribose 1-phosphate: step 2/6. In terms of biological role, catalyzes the dehydration of methylthioribulose-1-phosphate (MTRu-1-P) into 2,3-diketo-5-methylthiopentyl-1-phosphate (DK-MTP-1-P). This chain is Methylthioribulose-1-phosphate dehydratase, found in Hahella chejuensis (strain KCTC 2396).